The chain runs to 260 residues: DNA repair protein RecO (260 aa).

This sequence belongs to the RecO family.

Functionally, involved in DNA repair and RecF pathway recombination. In Streptococcus suis (strain 98HAH33), this protein is DNA repair protein RecO.